We begin with the raw amino-acid sequence, 436 residues long: MLEALFRDSVEEAINDSIKEGVVLAVYNTARDDQWLKSWFKGDDVSLDTLAEHSIWLRLVKDTEQFQLFEQVFPNVVVPSIYLIRAGKIELIIQGEDDRHWEKLLACIGIKDKKAGESSSRETNPGLAREEKSSRDVHRKNARERIAETTLEIQRREQLKQRKLAEEERERIIRLVRADRAERKALDETHHRTLDDDKPLDVHDYIKDAQKLHSSKCVLQIRMTDGKTLKHEFNSSETLNDVRKWVDVNRTDGDCPYSFHRGIPRVTFKDSDELKTLETLELTPRSALLLKPLETQNSGLSVTGMEGPSLLGRLYKGFSTWWHNDKDPEVTSQREETSKPNRHEVRSSTPLSGAASSSCFQYNNVREPVQSSAHASPMLTPSGTRYPSETNLTTSRSVSPNVFQFVNNDHQEDPEDPTTFNGNNVHLEKKKDEDKK.

K19 participates in a covalent cross-link: Glycyl lysine isopeptide (Lys-Gly) (interchain with G-Cter in ubiquitin). A disordered region spans residues 115–141 (AGESSSRETNPGLAREEKSSRDVHRKN). The UBX domain occupies 212–290 (LHSSKCVLQI…ELTPRSALLL (79 aa)). The span at 325–346 (DKDPEVTSQREETSKPNRHEVR) shows a compositional bias: basic and acidic residues. 2 disordered regions span residues 325 to 357 (DKDPEVTSQREETSKPNRHEVRSSTPLSGAASS) and 371 to 436 (SSAH…EDKK). A compositionally biased stretch (low complexity) spans 347–357 (SSTPLSGAASS). Residues 371–408 (SSAHASPMLTPSGTRYPSETNLTTSRSVSPNVFQFVNN) show a composition bias toward polar residues. S388 is subject to Phosphoserine. Positions 426–436 (HLEKKKDEDKK) are enriched in basic and acidic residues.

Interacts with CDC48.

The protein localises to the endoplasmic reticulum. Its function is as follows. Involved in CDC48-dependent protein degradation through the ubiquitin/proteasome pathway. In Saccharomyces cerevisiae (strain ATCC 204508 / S288c) (Baker's yeast), this protein is UBX domain-containing protein 7 (UBX7).